A 592-amino-acid polypeptide reads, in one-letter code: Protein US23 (592 aa).

Residues 407-491 form a disordered region; that stretch reads PRSLGDGEEE…NNVVPNVDRR (85 aa). A compositionally biased stretch (acidic residues) spans 460 to 481; the sequence is ADDEEQGEDDDDSGAEPMEPEE.

The protein belongs to the herpesviridae US22 family.

The protein localises to the virion tegument. This chain is Protein US23 (US23), found in Homo sapiens (Human).